The chain runs to 265 residues: Apolipoprotein A-I (265 aa).

The signal sequence occupies residues 1–20 (METKAVVLTLAVLFLTGSQA). 2 repeat units span residues 69 to 90 (LKILDNWDTLSSTFTKLQEQMR) and 91 to 112 (PIFQKLWEDLDKETSPLREVLN). The 10 X approximate tandem repeats stretch occupies residues 69-265 (LKILDNWDTL…DEATKKLNSQ (197 aa)). One copy of the 3; half-length repeat lies at 113–123 (KDLEELKQKVQ). 5 tandem repeats follow at residues 124-145 (PYLDQFQKKWQEEVELFRQKMA), 146-167 (PLGTELREGSRQKLQELQEKLG), 168-189 (PLGEELRDSLRSHVDALRTQLA), 190-209 (PYTEEMRQRLASRLEALKES), and 210-230 (NLAEYHTKASEHLSALRENAK). Met-195 carries the methionine sulfoxide modification. Residues 231–241 (PALEDFRQGLM) form a 9; half-length repeat. Position 241 is a methionine sulfoxide (Met-241). Copy 10 of the repeat occupies 242 to 265 (PVLEGFQKSVLAALDEATKKLNSQ).

This sequence belongs to the apolipoprotein A1/A4/E family. As to quaternary structure, homodimer. Interacts with APOA1BP and CLU. Component of a sperm activating protein complex (SPAP), consisting of APOA1, an immunoglobulin heavy chain, an immunoglobulin light chain and albumin. Interacts with NDRG1. Interacts with SCGB3A2. Interacts with NAXE and YJEFN3. Glycosylated. In terms of processing, palmitoylated. Post-translationally, phosphorylation sites are present in the extracellular medium. Major protein of plasma HDL, also found in chylomicrons.

Its subcellular location is the secreted. Participates in the reverse transport of cholesterol from tissues to the liver for excretion by promoting cholesterol efflux from tissues and by acting as a cofactor for the lecithin cholesterol acyltransferase (LCAT). As part of the SPAP complex, activates spermatozoa motility. This Orycteropus afer (Aardvark) protein is Apolipoprotein A-I (APOA1).